A 110-amino-acid polypeptide reads, in one-letter code: BolA-like protein 3 (110 aa).

It belongs to the BolA/IbaG family. In terms of assembly, interacts with NFU1.

Its subcellular location is the mitochondrion. Its function is as follows. Acts as a mitochondrial iron-sulfur (Fe-S) cluster assembly factor that facilitates (Fe-S) cluster insertion into a subset of mitochondrial proteins. Probably acts together with NFU1. The protein is BolA-like protein 3 (BOLA3) of Bos taurus (Bovine).